The primary structure comprises 181 residues: RING-H2 finger protein ATL56 (181 aa).

Positions 1–24 (MPPTNNYRISGEPPSTTPSHPPPK) are disordered. A compositionally biased stretch (pro residues) spans 15–24 (STTPSHPPPK). The chain crosses the membrane as a helical span at residues 32 to 52 (LFLVGVIMFSIFFLFLVLIGI). The RING-type; atypical zinc-finger motif lies at 110 to 152 (CVVCFDGFRQGQWCRNLPGCGHVFHRKCVDTWLLKASTCPICR).

This sequence belongs to the RING-type zinc finger family. ATL subfamily.

The protein resides in the membrane. It catalyses the reaction S-ubiquitinyl-[E2 ubiquitin-conjugating enzyme]-L-cysteine + [acceptor protein]-L-lysine = [E2 ubiquitin-conjugating enzyme]-L-cysteine + N(6)-ubiquitinyl-[acceptor protein]-L-lysine.. The protein operates within protein modification; protein ubiquitination. This chain is RING-H2 finger protein ATL56 (ATL56), found in Arabidopsis thaliana (Mouse-ear cress).